Consider the following 329-residue polypeptide: MLILQKLFDSVKIEIKNSHTIDKLDHIRIKYLGKKGIFSNLIKDLKNFSLEERKKYFIIFNEIKKKTINQINKKKIELNKIILDKQIEKEKIDVSLPGRRIKNGVIHPINHTITYIKNFFSKLGFESISGFEIEDEYHNFDALNIPKDHPARNIHDTFWFDENRLLRTQTSSMQIRIMKKEKPPIRLIFPGKVYRNDYDSTHTPMFHQVEGLIVEKNINFSNLKWIIYNFLRNFFHKDIAIRFRPSYFPFTTPSAEVDVVTNNGKLLEVLGCGMVHPSVLKNVNIDSNFYSACAFGIGIERITMLRYGISDLRSFFENDIRFIKQFKHI.

Belongs to the class-II aminoacyl-tRNA synthetase family. Phe-tRNA synthetase alpha subunit type 1 subfamily. Tetramer of two alpha and two beta subunits. Mg(2+) is required as a cofactor.

Its subcellular location is the cytoplasm. The enzyme catalyses tRNA(Phe) + L-phenylalanine + ATP = L-phenylalanyl-tRNA(Phe) + AMP + diphosphate + H(+). This chain is Phenylalanine--tRNA ligase alpha subunit (pheS), found in Buchnera aphidicola subsp. Schizaphis graminum (strain Sg).